The primary structure comprises 365 residues: Caffeic acid 3-O-methyltransferase 1 (365 aa).

130–136 (MNQDKVL) is a binding site for substrate. A substrate binding region spans residues 162–180 (AFEYHGTDPRFNKVFNKGM). S-adenosyl-L-methionine contacts are provided by Gly-208, Asp-231, Asp-251, Met-252, and Lys-265. His-269 functions as the Proton acceptor in the catalytic mechanism.

This sequence belongs to the class I-like SAM-binding methyltransferase superfamily. Cation-independent O-methyltransferase family. COMT subfamily. In terms of assembly, homodimer.

It catalyses the reaction (E)-caffeate + S-adenosyl-L-methionine = (E)-ferulate + S-adenosyl-L-homocysteine + H(+). It functions in the pathway aromatic compound metabolism; phenylpropanoid biosynthesis. Catalyzes the conversion of caffeic acid to ferulic acid and of 5-hydroxyferulic acid to sinapic acid. The resulting products may subsequently be converted to the corresponding alcohols that are incorporated into lignins. The chain is Caffeic acid 3-O-methyltransferase 1 (HOMT1) from Populus kitakamiensis (Aspen).